The chain runs to 101 residues: Cilia- and flagella-associated protein 141 (101 aa).

Microtubule inner protein component of sperm flagellar doublet microtubules.

Its subcellular location is the cytoplasm. The protein resides in the cytoskeleton. It localises to the cilium axoneme. It is found in the flagellum axoneme. Functionally, microtubule inner protein (MIP) part of the dynein-decorated doublet microtubules (DMTs) in cilia axoneme, which is required for motile cilia beating. The sequence is that of Cilia- and flagella-associated protein 141 from Mus musculus (Mouse).